The sequence spans 393 residues: Phosphoglycerate kinase (393 aa).

Substrate-binding positions include 21 to 23, Arg-36, 59 to 62, Arg-114, and Arg-147; these read DLN and HLGR. ATP contacts are provided by residues Lys-198, Glu-314, and 340–343; that span reads GGDT.

Belongs to the phosphoglycerate kinase family. As to quaternary structure, monomer.

It is found in the cytoplasm. It carries out the reaction (2R)-3-phosphoglycerate + ATP = (2R)-3-phospho-glyceroyl phosphate + ADP. It functions in the pathway carbohydrate degradation; glycolysis; pyruvate from D-glyceraldehyde 3-phosphate: step 2/5. The chain is Phosphoglycerate kinase from Buchnera aphidicola subsp. Baizongia pistaciae (strain Bp).